Consider the following 510-residue polypeptide: Light-independent protochlorophyllide reductase subunit B (510 aa).

A [4Fe-4S] cluster-binding site is contributed by Asp36. Catalysis depends on Asp296, which acts as the Proton donor. A substrate-binding site is contributed by 431-432 (GM).

It belongs to the ChlB/BchB/BchZ family. In terms of assembly, protochlorophyllide reductase is composed of three subunits; ChlL, ChlN and ChlB. Forms a heterotetramer of two ChlB and two ChlN subunits. Requires [4Fe-4S] cluster as cofactor.

It localises to the plastid. Its subcellular location is the chloroplast. The enzyme catalyses chlorophyllide a + oxidized 2[4Fe-4S]-[ferredoxin] + 2 ADP + 2 phosphate = protochlorophyllide a + reduced 2[4Fe-4S]-[ferredoxin] + 2 ATP + 2 H2O. Its pathway is porphyrin-containing compound metabolism; chlorophyll biosynthesis (light-independent). In terms of biological role, component of the dark-operative protochlorophyllide reductase (DPOR) that uses Mg-ATP and reduced ferredoxin to reduce ring D of protochlorophyllide (Pchlide) to form chlorophyllide a (Chlide). This reaction is light-independent. The NB-protein (ChlN-ChlB) is the catalytic component of the complex. This chain is Light-independent protochlorophyllide reductase subunit B, found in Stigeoclonium helveticum (Green alga).